Reading from the N-terminus, the 150-residue chain is Thyroid hormone-inducible hepatic protein (150 aa).

The disordered stretch occupies residues 83–105 (KVAGNEGSEAENEAAETEEAEED). Ser-90 is modified (phosphoserine). Positions 90–105 (SEAENEAAETEEAEED) are enriched in acidic residues.

This sequence belongs to the SPOT14 family. Homodimer. Heterodimer with MID1IP1. Interacts with THRB and PLAGL1. As to expression, highly expressed in liver, lactating mammary gland, epididymal, retroperitoneal and brown fat. Mainly expressed in tissues that synthesize triglycerides.

It is found in the nucleus. It localises to the cytoplasm. Plays a role in the regulation of lipogenesis, especially in lactating mammary gland. Important for the biosynthesis of triglycerides with medium-length fatty acid chains. May modulate lipogenesis by interacting with MID1IP1 and preventing its interaction with ACACA. May function as transcriptional coactivator. May modulate the transcription factor activity of THRB. This is Thyroid hormone-inducible hepatic protein (Thrsp) from Rattus norvegicus (Rat).